Here is a 327-residue protein sequence, read N- to C-terminus: MTIGKSPILLHHHVIFLLLLVLQVSGQHQPRTTAPPYIAQRPNQVPAVIIAMLMFTLLFSMLACCVCYKYTNTSPHGTSSDTEEGGHGEVAFTRRTSRGLGKDVINSFPSFLYSQVKGLKIGKGGVECAICLNEFEDEETLRLMPPCSHAFHASCIDVWLSSRSTCPVCRASLPPKPGSDQNSLYPFIRPHDNQDMDLENVTARRSVLESPDVRLLDRLSWSNNTGANTPPRSRSTGLSNWRITELLFPRSHSTGHSLVPRVENLDRFTLQLPEEVRRQLSHMKTLPQARSSREGYRSGSVGSERRGKGKEKEFGEGSFDRLKAEMV.

A signal peptide spans 1–26 (MTIGKSPILLHHHVIFLLLLVLQVSG). Residues 47-67 (AVIIAMLMFTLLFSMLACCVC) form a helical membrane-spanning segment. The segment at 128 to 170 (CAICLNEFEDEETLRLMPPCSHAFHASCIDVWLSSRSTCPVCR) adopts an RING-type; atypical zinc-finger fold. The tract at residues 280 to 327 (LSHMKTLPQARSSREGYRSGSVGSERRGKGKEKEFGEGSFDRLKAEMV) is disordered. Residues 303-327 (SERRGKGKEKEFGEGSFDRLKAEMV) are compositionally biased toward basic and acidic residues.

Belongs to the RING-type zinc finger family. ATL subfamily.

Its subcellular location is the membrane. The catalysed reaction is S-ubiquitinyl-[E2 ubiquitin-conjugating enzyme]-L-cysteine + [acceptor protein]-L-lysine = [E2 ubiquitin-conjugating enzyme]-L-cysteine + N(6)-ubiquitinyl-[acceptor protein]-L-lysine.. It functions in the pathway protein modification; protein ubiquitination. The protein is RING-H2 finger protein ATL34 (ATL34) of Arabidopsis thaliana (Mouse-ear cress).